A 353-amino-acid chain; its full sequence is uncharacterized protein (353 aa).

The N-terminal stretch at 1 to 23 (MSAGKGLLLVICLLFLPLKSAMA) is a signal peptide.

This sequence to E.coli YqiI.

May be involved in a fimbrial system chaperoned by YbgP and exported by YbgQ. This is an uncharacterized protein from Escherichia coli (strain K12).